The sequence spans 502 residues: Type II methyltransferase M.HincII (502 aa).

Belongs to the N(4)/N(6)-methyltransferase family.

The catalysed reaction is a 2'-deoxyadenosine in DNA + S-adenosyl-L-methionine = an N(6)-methyl-2'-deoxyadenosine in DNA + S-adenosyl-L-homocysteine + H(+). Its function is as follows. A gamma subtype methylase that recognizes the double-stranded sequence 5'-GTYRAC-3', methylates A-5 on both strands, and protects the DNA from cleavage by the HincII endonuclease. The polypeptide is Type II methyltransferase M.HincII (Haemophilus influenzae).